The sequence spans 74 residues: ERTHTGEKPFECPECHKRFTRDHHLKTHMRLHTGEKPYHCSHCDRQFVQVANLRRHLRVHTGERPYACELCDAR.

4 C2H2-type zinc fingers span residues 1-4, 10-32, 38-60, and 66-74; these read ERTH, FECP…MRLH, YHCS…LRVH, and YACELCDAR.

The protein belongs to the krueppel C2H2-type zinc-finger protein family.

The protein localises to the nucleus. Krueppel is a gap class segmentation protein. This chain is Protein krueppel (Kr), found in Psychoda cinerea (Psychod fly).